The following is a 393-amino-acid chain: Probable WRKY transcription factor 25 (393 aa).

The segment at residues 160 to 224 is a DNA-binding region (WRKY 1); the sequence is MVSRNSNDGY…YKGGHNHPKP (65 aa). Positions 191, 196, 219, and 221 each coordinate Zn(2+). Disordered regions lie at residues 217–242 and 277–303; these read GGHN…VNGR and SEYG…DEGM. A compositionally biased stretch (polar residues) spans 229–240; sequence RPSQSSLPSSVN. Basic and acidic residues predominate over residues 289–298; the sequence is PEMKRMKREG. Residues 322-387 constitute a DNA-binding region (WRKY 2); it reads SDIDVLIDGF…YEGRHNHDIP (66 aa). Residues Cys353, Cys358, His382, and His384 each coordinate Zn(2+).

The protein belongs to the WRKY group I family. As to quaternary structure, interacts with MKS1. Interacts with SIB1. Interacts with VQ10 and CAMBP25/VQ15. Phosphorylated by MPK4. Highly expressed in roots and at lower levels in leaves, stems and seeds.

The protein resides in the nucleus. In terms of biological role, transcription factor. Interacts specifically with the W box (5'-(T)TGAC[CT]-3'), a frequently occurring elicitor-responsive cis-acting element. Functions with WRKY33 as positive regulator of salt stress response and abscisic acid (ABA) signaling. Plays a partial role in heat stress tolerance. Functions with WRKY26 and WRKY33 as positive regulator of plant thermotolerance by partially participating in ethylene-response signal transduction pathway. The polypeptide is Probable WRKY transcription factor 25 (WRKY25) (Arabidopsis thaliana (Mouse-ear cress)).